The primary structure comprises 387 residues: ERBB-3 BINDING PROTEIN 1 (387 aa).

Necessary for nucleolar localization stretches follow at residues methionine 1–leucine 49 and leucine 297–glycine 387. Positions valine 47 to alanine 55 are RNA-binding. Residues leucine 337 to glycine 387 are disordered. The interaction with RNA stretch occupies residues proline 356–glycine 373. Positions lysine 358–lysine 372 are enriched in basic residues. Residues lysine 360 to lysine 369 carry the Nuclear localization signal motif.

This sequence belongs to the peptidase M24 family. Component of a ribonucleoprotein complex. Expressed during tuberisation and in roots, nodes, internodes, petioles, leaves, stolons, tubers and sprouts.

The protein localises to the nucleus. Binds RNA. Associates with 28S, 18S and 5.8S mature rRNAs, several rRNA precursors and probably U3 small nucleolar RNA. May be involved in regulation of intermediate and late steps of rRNA processing. May be involved in ribosome assembly. Required for expression of cell cycle genes such as CYCD3-1, RNR2A and CDKB1-1. Promotes, in a dose- and auxin-dependent manner, organ growth by stimulating both cell proliferation and expansion, via the regulation of RBR1 levels. In Solanum tuberosum (Potato), this protein is ERBB-3 BINDING PROTEIN 1.